The chain runs to 475 residues: MRDYTKQYINGEWVESNSNETIEVINPATEEVIGKVAKGNKADVDKAVEAADDVYLEFRHTSVKERQALLDKIVKEYENRKDDIVQAITDELGAPLSLSERVHYQMGLNHFVAARDALDNYEFEERRGDDLVVKEAIGVSGLITPWNFPTNQTSLKLAAAFAAGSPVVLKPSEETPFAAVILAEIFDKVGVPKGVFNLVNGDGAGVGNPLSEHPKVRMMSFTGSGPTGSKIMEKAAKDFKKVSLELGGKSPYIVLDDVDIKEAAKATTGKVVNNTGQVCTAGTRVLVPNKIKDAFLAELKEQFSQVRVGNPREDGTQVGPIISKKQFDQVQNYINKGIEEGAELFYGGPGKPEGLEKGYFARPTIFINVDNQMTIAQEEIFGPVMSVITYNDLDEAIQIANDTKYGLAGYVIGKDKETLHKVARSIEAGTVEINEAGRKPDLPFGGYKQSGLGREWGDYGIEEFLEVKSIAGYFK.

Residues 146–147 (WN) and 223–224 (GS) each bind NAD(+). Catalysis depends on glutamate 245, which acts as the Proton acceptor. Leucine 246 contributes to the NAD(+) binding site. Residue cysteine 279 is the Nucleophile of the active site. An NAD(+)-binding site is contributed by glutamate 379.

This sequence belongs to the aldehyde dehydrogenase family.

It carries out the reaction an aldehyde + NAD(+) + H2O = a carboxylate + NADH + 2 H(+). In Staphylococcus aureus (strain USA300), this protein is Putative aldehyde dehydrogenase.